We begin with the raw amino-acid sequence, 60 residues long: Large ribosomal subunit protein bL32 (60 aa).

This sequence belongs to the bacterial ribosomal protein bL32 family.

This chain is Large ribosomal subunit protein bL32, found in Borrelia duttonii (strain Ly).